A 928-amino-acid polypeptide reads, in one-letter code: MLSRLSAVWRPSRVALRIQRVDFTTCGNRLNRSTQPNEPPLVSGIAARSRTAKAEPVEKRGRAAIKIDSPPPPLEPPRISEEHMTRRRKVGGGKTKAAAVTKSKQRRSGRTVGASAFNTARRANGIEGSAPGKGGASDVAIDDDDDEKLVDEESKQLMQLLKEEALRREEEKKKRLRAKAAAEPTEVTDDKEYLSKLGVAERTQPVGTEAKISAQGKAEGASEGQTHFSDADADSQLPILTSLSPEQQRALRLALKGRNLFITGGAGSGKSLLIREIVYQLRHNKRRCVYVTATTGVAALNVRGSTVNSFAGVKFGDGDARQLLKWVRRSRRAAGRWRYCQTLIIDEISMMDPLLLDKLDVIARAIRRRNEPFGGIQVILCGDFLQLPPIPPRNKPQQKTEENAEAQEGGDPTDGTPAPSKLQYCFETSTWTSLNLITVILHKKFRQHDDLAFQQVLDELRVGSLSPESYELLLSRTVASKSSAKSRKKKDEDAGNDGVLPLTDAETTPAAAEKDRHVRLCATNKEVEMRNAKYFAALEPKGLPIYPSPNDGSSQQTGSSNGANSVTEEDTMRPLQVYRAYDAYSTHETEPETTEETTTGTQPSQPWVRFEDSTLPTDLALKVGTRVMVLQNISLRLGLVNGSVGEVVGFLHPLELVELVLRAPRERHFPSARGQELLERAGLPTLQDAFRCVDTALGQSLFYYLRERGIRRPEDASYGCVYGNTHCRDILRLVGLGKTESANAVHPLEMYLGGIAPQHVRLTRLPIVRLDLREGNHTSSDSGAVEDGGFANGSKRLPKHVYAFISPSSHQWYMGDQPVATRTQLPLRQAWAMTVHKAQGLTISHVEVAIHRFFSPGQAYVALSRSTRLDNIRLLDFNNASVHACPRAKEFYTVLEEEELDNEIEDDGTEGDEEALEGDGEYEGEVEE.

Residues 1 to 49 constitute a mitochondrion transit peptide; it reads MLSRLSAVWRPSRVALRIQRVDFTTCGNRLNRSTQPNEPPLVSGIAARS. Disordered stretches follow at residues 29–141 and 176–231; these read RLNR…DVAI and LRAK…FSDA. Positions 52–61 are enriched in basic and acidic residues; it reads AKAEPVEKRG. Residue 264 to 271 coordinates ATP; sequence GGAGSGKS. Disordered stretches follow at residues 389–421, 481–513, 545–572, and 585–607; these read PIPP…APSK, KSSA…AAAE, IYPS…EDTM, and STHE…SQPW. Positions 550–566 are enriched in polar residues; sequence NDGSSQQTGSSNGANSV. A DNA-binding region spans residues 858–877; that stretch reads QAYVALSRSTRLDNIRLLDF. Residues 898-928 are disordered; that stretch reads EELDNEIEDDGTEGDEEALEGDGEYEGEVEE.

It belongs to the helicase family. PIF1 subfamily. In terms of assembly, monomer. Requires Mg(2+) as cofactor.

It is found in the mitochondrion. The enzyme catalyses Couples ATP hydrolysis with the unwinding of duplex DNA at the replication fork by translocating in the 5'-3' direction. This creates two antiparallel DNA single strands (ssDNA). The leading ssDNA polymer is the template for DNA polymerase III holoenzyme which synthesizes a continuous strand.. The catalysed reaction is ATP + H2O = ADP + phosphate + H(+). In terms of biological role, DNA-dependent ATPase and 5'-3' DNA helicase required for the maintenance of mitochondrial (kinetoplast) genome stability. Involved in processing of minicircle Okazaki fragments. The protein is ATP-dependent DNA helicase PIF5 of Trypanosoma brucei brucei (strain 927/4 GUTat10.1).